The following is a 431-amino-acid chain: UDP-N-acetylglucosamine 1-carboxyvinyltransferase (431 aa).

22–23 (KN) contributes to the phosphoenolpyruvate binding site. Arg-102 contributes to the UDP-N-acetyl-alpha-D-glucosamine binding site. The active-site Proton donor is Cys-126. Cys-126 bears the 2-(S-cysteinyl)pyruvic acid O-phosphothioketal mark. UDP-N-acetyl-alpha-D-glucosamine-binding residues include Asp-318 and Ile-340.

This sequence belongs to the EPSP synthase family. MurA subfamily.

It localises to the cytoplasm. The enzyme catalyses phosphoenolpyruvate + UDP-N-acetyl-alpha-D-glucosamine = UDP-N-acetyl-3-O-(1-carboxyvinyl)-alpha-D-glucosamine + phosphate. It functions in the pathway cell wall biogenesis; peptidoglycan biosynthesis. Functionally, cell wall formation. Adds enolpyruvyl to UDP-N-acetylglucosamine. This chain is UDP-N-acetylglucosamine 1-carboxyvinyltransferase, found in Bartonella quintana (strain Toulouse) (Rochalimaea quintana).